Reading from the N-terminus, the 32-residue chain is GGSVPCGESCVFIPCITSLAGCSCKNKVCYYD.

The cyclopeptide (Gly-Asp) cross-link spans 1 to 32 (GGSVPCGESCVFIPCITSLAGCSCKNKVCYYD). Cystine bridges form between C6-C22, C10-C24, and C15-C29.

In terms of processing, this is a cyclic peptide. Expressed in leaves, flowers, peduncles and seeds (at protein level).

In terms of biological role, probably participates in a plant defense mechanism. Reduces growth of and increases mortality in larvae of D.saccharalis. Kills cultured SF-9 cells of S.frugiperda probably by disrupting plasma membranes. Has hemolytic activity against human erythrocytes. Has no antibacterial activity against E.coli strain ATCC 8739 and S.aureus strain ATCC 25923. In Palicourea rigida, this protein is Parigidin-br1.